The sequence spans 199 residues: Probable nicotinate-nucleotide adenylyltransferase (199 aa).

It belongs to the NadD family.

The enzyme catalyses nicotinate beta-D-ribonucleotide + ATP + H(+) = deamido-NAD(+) + diphosphate. The protein operates within cofactor biosynthesis; NAD(+) biosynthesis; deamido-NAD(+) from nicotinate D-ribonucleotide: step 1/1. In terms of biological role, catalyzes the reversible adenylation of nicotinate mononucleotide (NaMN) to nicotinic acid adenine dinucleotide (NaAD). In Roseobacter denitrificans (strain ATCC 33942 / OCh 114) (Erythrobacter sp. (strain OCh 114)), this protein is Probable nicotinate-nucleotide adenylyltransferase.